The following is a 352-amino-acid chain: Uroporphyrinogen decarboxylase (352 aa).

Substrate contacts are provided by residues 26 to 30 (RQAGR), Asp76, Tyr153, Ser208, and His323.

Belongs to the uroporphyrinogen decarboxylase family. Homodimer.

It is found in the cytoplasm. The enzyme catalyses uroporphyrinogen III + 4 H(+) = coproporphyrinogen III + 4 CO2. It functions in the pathway porphyrin-containing compound metabolism; protoporphyrin-IX biosynthesis; coproporphyrinogen-III from 5-aminolevulinate: step 4/4. Catalyzes the decarboxylation of four acetate groups of uroporphyrinogen-III to yield coproporphyrinogen-III. The polypeptide is Uroporphyrinogen decarboxylase (Prochlorococcus marinus (strain MIT 9303)).